A 140-amino-acid polypeptide reads, in one-letter code: Large ribosomal subunit protein bL17 (140 aa).

Belongs to the bacterial ribosomal protein bL17 family. Part of the 50S ribosomal subunit. Contacts protein L32.

This chain is Large ribosomal subunit protein bL17, found in Rhizobium etli (strain CIAT 652).